The following is a 404-amino-acid chain: RNA exonuclease 3 (404 aa).

An Exonuclease domain is found at 243 to 389 (VLSLDCEMAF…QDAIATMDVV (147 aa)).

It belongs to the REXO1/REXO3 family.

It is found in the cytoplasm. It localises to the nucleus. Its function is as follows. 3' to 5' exoribonuclease required for proper 3' end maturation of MRP RNA and of the U5L snRNA. The polypeptide is RNA exonuclease 3 (REX3) (Saccharomyces cerevisiae (strain ATCC 204508 / S288c) (Baker's yeast)).